We begin with the raw amino-acid sequence, 593 residues long: NADH-quinone oxidoreductase subunit C/D (593 aa).

The segment at 1-184 is NADH dehydrogenase I subunit C; it reads MTADSALYIP…DPYSLSAAKQ (184 aa). Residues 208–593 form an NADH dehydrogenase I subunit D region; it reads DYMFLNLGPN…IDFVMADVDR (386 aa).

This sequence in the N-terminal section; belongs to the complex I 30 kDa subunit family. In the C-terminal section; belongs to the complex I 49 kDa subunit family. As to quaternary structure, NDH-1 is composed of 13 different subunits. Subunits NuoB, CD, E, F, and G constitute the peripheral sector of the complex.

Its subcellular location is the cell inner membrane. It carries out the reaction a quinone + NADH + 5 H(+)(in) = a quinol + NAD(+) + 4 H(+)(out). In terms of biological role, NDH-1 shuttles electrons from NADH, via FMN and iron-sulfur (Fe-S) centers, to quinones in the respiratory chain. The immediate electron acceptor for the enzyme in this species is believed to be ubiquinone. Couples the redox reaction to proton translocation (for every two electrons transferred, four hydrogen ions are translocated across the cytoplasmic membrane), and thus conserves the redox energy in a proton gradient. This chain is NADH-quinone oxidoreductase subunit C/D, found in Pseudomonas aeruginosa (strain UCBPP-PA14).